Consider the following 313-residue polypeptide: 3-O-acetylpapaveroxine carboxylesterase CXE2 (313 aa).

The Involved in the stabilization of the negatively charged intermediate by the formation of the oxyanion hole motif lies at 72–74 (HGG). Residues Ser-158, Asp-262, and His-292 contribute to the active site.

The protein belongs to the 'GDXG' lipolytic enzyme family.

The enzyme catalyses 3-O-acetylpapaveroxine + H2O = narcotine hemiacetal + acetate + H(+). It functions in the pathway alkaloid biosynthesis. In terms of biological role, carboxylesterase involved in the biosynthesis of the benzylisoquinoline alkaloid noscapine. Converts 3-O-acetylpapaveroxine to narcotine hemiacetal. This Papaver somniferum (Opium poppy) protein is 3-O-acetylpapaveroxine carboxylesterase CXE2.